The chain runs to 200 residues: Recombination protein RecR (200 aa).

A C4-type zinc finger spans residues 59 to 74 (CDICGNVCETSPCPVC). Residues 82 to 177 (SVICVVEEPK…KVTRLASGLP (96 aa)) enclose the Toprim domain.

This sequence belongs to the RecR family.

Functionally, may play a role in DNA repair. It seems to be involved in an RecBC-independent recombinational process of DNA repair. It may act with RecF and RecO. This chain is Recombination protein RecR, found in Bifidobacterium adolescentis (strain ATCC 15703 / DSM 20083 / NCTC 11814 / E194a).